A 288-amino-acid chain; its full sequence is Probable syndecan (288 aa).

The N-terminal stretch at 1–26 (MILKLNFCLSTYSVLILLSLSTQAFA) is a signal peptide. Residues 27-231 (ANQAKTKVVP…ETLANGFYAA (205 aa)) are Extracellular-facing. The segment at 67–175 (EVNGSGYPTD…NIHNDEDFFT (109 aa)) is disordered. Asparagine 69 carries N-linked (GlcNAc...) asparagine glycosylation. O-linked (Xyl...) (glycosaminoglycan) serine glycosylation is found at serine 71 and serine 86. Polar residues predominate over residues 89–104 (PPSSATTKSDKVTSPS). Over residues 106–124 (AVVTAKPTTVPTTTASFKP) the composition is skewed to low complexity. Residues 141-164 (VEEDEDDDEDEDEDDEDDEEDFAD) are compositionally biased toward acidic residues. Serine 214 carries an O-linked (Xyl...) (glycosaminoglycan) serine glycan. A helical transmembrane segment spans residues 232–252 (IAGGVLVAVITAILLVLFVVF). At 253 to 288 (RIRKKDEGSYALDEPKQARPYASYGYTKASTKEFYA) the chain is on the cytoplasmic side.

It belongs to the syndecan proteoglycan family.

It is found in the membrane. The protein localises to the cell surface. It localises to the cell junction. Its subcellular location is the cytoplasm. In terms of biological role, cell surface proteoglycan that bears heparan sulfate. Required for correct mitotic spindle orientation of the ABar blastomere division plane and this may be through modulation of astral microtubule array, and in association with the wnt-signaling proteins mig-5 and dsh-2. Involved in the migration of AQR and PQR neurons, which descend from the Q neuroblasts. Promotes the axon guidance of D-type motor neurons. The protein is Probable syndecan of Caenorhabditis elegans.